We begin with the raw amino-acid sequence, 2800 residues long: Probable serine/threonine-protein kinase roco5 (2800 aa).

Residues 1–61 show a composition bias toward basic and acidic residues; that stretch reads MEVIKKEKKD…EKEKDKEKDG (61 aa). Disordered stretches follow at residues 1–92, 123–225, and 417–437; these read MEVI…SAQS, TTTT…SPVD, and GINSANSNNNNNNSGGGSSGI. Residues 77–86 are compositionally biased toward pro residues; it reads PTPPPPPPPS. Low complexity-rich tracts occupy residues 123–134 and 143–170; these read TTTTTTTTSSNN and NNNTSNNNINNNNKTSNTTGSNVSSSNN. Polar residues predominate over residues 176–190; the sequence is INVTSLDSGGNNNAS. A compositionally biased stretch (basic and acidic residues) spans 194-218; sequence ISNEHSPKNRKEKEKEKDKDNKEDS. The DH domain maps to 227–508; that stretch reads NRRKLVEGFM…VQVVKDIVNE (282 aa). Residues 417 to 429 show a composition bias toward low complexity; it reads GINSANSNNNNNN. Positions 540–649 constitute a PH domain; that stretch reads KFLKEGILIE…WFQVLSQASL (110 aa). LRR repeat units follow at residues 777-800, 805-832, 834-856, and 861-885; these read NKSITHLTLSQNSINDPCAVALGD, NHSLIQMDLSENTIADKGLISLIDGILS, PSITVVILTQNQITDTGAKHISK, and NQTLNALFLEDNNITQSMGAEIIDQ. The disordered stretch occupies residues 926–946; that stretch reads KQLQVNQKSTTPSTSTSTTSS. Positions 934-946 are enriched in low complexity; the sequence is STTPSTSTSTTSS. LRR repeat units lie at residues 971-984, 985-1007, 1008-1031, 1033-1056, 1058-1077, 1078-1101, 1128-1151, 1152-1174, 1175-1197, and 1199-1222; these read LNKLNMLSLDSRRI, SDLKELYLDHNCISSIPVSILKE, LKNLQILDLSNNQLSSLPSEISEM, ELKLLNVSHNNLSSLPIELGTLCK, NHLDISFNFIETINVNSLSQ, LVNLKVLMMQRNYFNRLPIEIFTR, AIKATKLDLSDCGLSALPIEIGSI, SSLIELDLTNNRIKDLPPQIGKL, SSLQTLNLSNNAIESLPWQLSQL, and TLKVLNITGNPISFDGASNAKISI. Residues 1244–1464 form the Roc domain; that stretch reads KEKPCMRMKL…NHIVKLGKAE (221 aa). Residues 1257–1264, 1348–1352, and 1407–1410 each bind GTP; these read GQENVGKT, DFAGQ, and THLD. The COR 1 domain maps to 1473-1604; sequence RSYFQLENLI…KFEIVHPLPD (132 aa). Disordered stretches follow at residues 1605–1665 and 1688–1711; these read PKAT…SLLN and DQSTSPSNSTTPSPNTSSNNFSDS. 3 stretches are compositionally biased toward low complexity: residues 1610–1645, 1653–1665, and 1688–1707; these read SSSSSSPSTTQKSLNNSGSNLKSSGSAISTSSSSTT, RTNSTTNTTSLLN, and DQSTSPSNSTTPSPNTSSNN. The region spanning 1717 to 1790 is the COR 2 domain; it reads KSSTKHLVPI…VKEFWKNGLL (74 aa). The segment covering 1886–2008 has biased composition (low complexity); it reads SQQQHHQQQQ…LNPDSTSSSN (123 aa). 2 disordered regions span residues 1886–2011 and 2050–2070; these read SQQQ…NETS and RNTNKPKINGTTGSGSSSSIV. Over residues 2050–2059 the composition is skewed to polar residues; the sequence is RNTNKPKING. Positions 2175 to 2440 constitute a Protein kinase domain; it reads LEIIEKVGEG…PTFIDIHSRL (266 aa). ATP is bound by residues 2181 to 2189 and Lys-2202; that span reads VGEGGFGIV. Asp-2300 functions as the Proton acceptor in the catalytic mechanism. 4 stretches are compositionally biased toward low complexity: residues 2452–2490, 2583–2654, 2669–2685, and 2694–2704; these read TTTNSAKSTISTGFNSNSGATTTTKPKSSTISSGSGTTS, LKTP…SPIS, TTQTTSTPPTNQTPNPT, and SSLSSNSINKP. 2 disordered regions span residues 2452-2498 and 2544-2800; these read TTTN…HPQL and AGGN…AIPK. The span at 2705-2723 shows a compositional bias: pro residues; it reads PSKPLPTPGGVTSPPPPPT. The segment covering 2730-2756 has biased composition (polar residues); sequence IKFNSISAGNKTIGQSSTLPSSTLKQF. The segment covering 2757-2787 has biased composition (low complexity); that stretch reads TANNNTSPSGSSSLPNSTVSSPSSSFLLRPT.

Belongs to the protein kinase superfamily. TKL Ser/Thr protein kinase family. ROCO subfamily.

The catalysed reaction is L-seryl-[protein] + ATP = O-phospho-L-seryl-[protein] + ADP + H(+). It carries out the reaction L-threonyl-[protein] + ATP = O-phospho-L-threonyl-[protein] + ADP + H(+). Its function is as follows. May act as a serine/threonine-protein kinase and guanine-nucleotide releasing factor. In Dictyostelium discoideum (Social amoeba), this protein is Probable serine/threonine-protein kinase roco5 (roco5).